The chain runs to 74 residues: Mitochondrial import receptor subunit TOM6 homolog (74 aa).

Residues 1 to 20 are compositionally biased toward low complexity; it reads MASSGVTVSAAGSASEASEV. The segment at 1-21 is disordered; that stretch reads MASSGVTVSAAGSASEASEVP. The residue at position 2 (Ala2) is an N-acetylalanine.

The protein belongs to the Tom6 family. In terms of assembly, forms part of the preprotein translocase complex of the outer mitochondrial membrane (TOM complex) which consists of at least 7 different proteins (TOMM5, TOMM6, TOMM7, TOMM20, TOMM22, TOMM40 and TOMM70).

Its subcellular location is the mitochondrion outer membrane. This Mus musculus (Mouse) protein is Mitochondrial import receptor subunit TOM6 homolog (Tomm6).